A 406-amino-acid chain; its full sequence is Cysteine desulfurase (406 aa).

The residue at position 226 (Lys-226) is an N6-(pyridoxal phosphate)lysine. Cys-364 serves as the catalytic Cysteine persulfide intermediate.

This sequence belongs to the class-V pyridoxal-phosphate-dependent aminotransferase family. Csd subfamily. As to quaternary structure, homodimer. Interacts with SufE and the SufBCD complex composed of SufB, SufC and SufD. The interaction with SufE is required to mediate the direct transfer of the sulfur atom from the S-sulfanylcysteine. Requires pyridoxal 5'-phosphate as cofactor.

It is found in the cytoplasm. It carries out the reaction (sulfur carrier)-H + L-cysteine = (sulfur carrier)-SH + L-alanine. The enzyme catalyses L-selenocysteine + AH2 = hydrogenselenide + L-alanine + A + H(+). It participates in cofactor biosynthesis; iron-sulfur cluster biosynthesis. Its function is as follows. Cysteine desulfurases mobilize the sulfur from L-cysteine to yield L-alanine, an essential step in sulfur metabolism for biosynthesis of a variety of sulfur-containing biomolecules. Component of the suf operon, which is activated and required under specific conditions such as oxidative stress and iron limitation. Acts as a potent selenocysteine lyase in vitro, that mobilizes selenium from L-selenocysteine. Selenocysteine lyase activity is however unsure in vivo. The protein is Cysteine desulfurase of Escherichia coli O6:K15:H31 (strain 536 / UPEC).